A 375-amino-acid chain; its full sequence is GDP-mannose-dependent alpha-mannosyltransferase (375 aa).

This sequence belongs to the glycosyltransferase group 1 family. Glycosyltransferase 4 subfamily.

It participates in phospholipid metabolism; phosphatidylinositol metabolism. Functionally, catalyzes the addition of a mannose residue from GDP-D-mannose to GlcAGroAc2 to generate 1,2-di-O-C16/C18:1-(alpha-D-mannopyranosyl)-(1-4)-(alpha-D-glucopyranosyluronic acid)-(1-3)-glycerol(ManGlcAGroAc2). This chain is GDP-mannose-dependent alpha-mannosyltransferase (mgtA), found in Mycolicibacterium smegmatis (strain ATCC 700084 / mc(2)155) (Mycobacterium smegmatis).